Consider the following 423-residue polypeptide: Glutamyl-tRNA(Gln) amidotransferase subunit A (423 aa).

Residues Lys-28 and Ser-103 each act as charge relay system in the active site. The active-site Acyl-ester intermediate is the Ser-127.

It belongs to the amidase family. GatA subfamily. As to quaternary structure, heterotrimer of A, B and C subunits.

The enzyme catalyses L-glutamyl-tRNA(Gln) + L-glutamine + ATP + H2O = L-glutaminyl-tRNA(Gln) + L-glutamate + ADP + phosphate + H(+). Allows the formation of correctly charged Gln-tRNA(Gln) through the transamidation of misacylated Glu-tRNA(Gln) in organisms which lack glutaminyl-tRNA synthetase. The reaction takes place in the presence of glutamine and ATP through an activated gamma-phospho-Glu-tRNA(Gln). The sequence is that of Glutamyl-tRNA(Gln) amidotransferase subunit A from Halobacterium salinarum (strain ATCC 700922 / JCM 11081 / NRC-1) (Halobacterium halobium).